Reading from the N-terminus, the 634-residue chain is Threonine--tRNA ligase (634 aa).

The TGS domain maps to 1 to 61 (MINIRFPDGS…NSNCELRLIT (61 aa)). A catalytic region spans residues 241–532 (DHRKIGKVLD…LIEHYAGNLP (292 aa)). Zn(2+) contacts are provided by Cys332, His383, and His509.

Belongs to the class-II aminoacyl-tRNA synthetase family. In terms of assembly, homodimer. Zn(2+) is required as a cofactor.

The protein resides in the cytoplasm. It catalyses the reaction tRNA(Thr) + L-threonine + ATP = L-threonyl-tRNA(Thr) + AMP + diphosphate + H(+). Functionally, catalyzes the attachment of threonine to tRNA(Thr) in a two-step reaction: L-threonine is first activated by ATP to form Thr-AMP and then transferred to the acceptor end of tRNA(Thr). Also edits incorrectly charged L-seryl-tRNA(Thr). This chain is Threonine--tRNA ligase, found in Francisella tularensis subsp. holarctica (strain FTNF002-00 / FTA).